The following is an 860-amino-acid chain: Envelope glycoprotein (860 aa).

The propeptide occupies 1-6; the sequence is MVSIAF. Over 7–614 the chain is Extracellular; the sequence is YGGIPGGIST…GKDLWSHIGN (608 aa). N-linked (GlcNAc...) asparagine; by host glycans are attached at residues Asn40, Asn112, Asn141, Asn148, Asn186, Asn201, Asn214, Asn235, Asn244, Asn308, Asn337, Asn340, Asn346, Asn369, Asn400, Asn407, Asn412, and Asn423. Positions 447-467 are fusion peptide; the sequence is FGISAIVAAIVAATAIAASAT. Asn484 and Asn491 each carry an N-linked (GlcNAc...) asparagine; by host glycan. The segment at 499-514 is immunosuppression; that stretch reads LIEQQIKILYAMILQT. 2 N-linked (GlcNAc...) asparagine; by host glycosylation sites follow: Asn551 and Asn558. Coiled coils occupy residues 577-625 and 664-700; these read ILTT…SIIK and KKFY…YCKQ. A helical membrane pass occupies residues 615-635; it reads WIPGLGASIIKYIVMFLLIYL. The Cytoplasmic segment spans residues 636–860; the sequence is LLTSSPKILR…TSHVSMPQYV (225 aa). Residues 746-765 form a disordered region; that stretch reads AAINEHKNGSGGNNPHQGSL.

As to quaternary structure, the mature envelope protein (Env) consists of a trimer of SU-TM heterodimers attached by noncovalent interactions or by a labile interchain disulfide bond. In terms of processing, specific enzymatic cleavages in vivo yield mature proteins. Envelope glycoproteins are synthesized as an inactive precursor that is N-glycosylated and processed likely by host cell furin or by a furin-like protease in the Golgi to yield the mature SU and TM proteins. The cleavage site between SU and TM requires the minimal sequence [KR]-X-[KR]-R.

The protein localises to the virion membrane. The protein resides in the host cell membrane. The surface protein (SU) attaches the virus to the host cell by binding to its receptor. This interaction triggers the refolding of the transmembrane protein (TM) and is thought to activate its fusogenic potential by unmasking its fusion peptide. Fusion occurs at the host cell plasma membrane. Functionally, the transmembrane protein (TM) acts as a class I viral fusion protein. Under the current model, the protein has at least 3 conformational states: pre-fusion native state, pre-hairpin intermediate state, and post-fusion hairpin state. During viral and target cell membrane fusion, the coiled coil regions (heptad repeats) assume a trimer-of-hairpins structure, positioning the fusion peptide in close proximity to the C-terminal region of the ectodomain. The formation of this structure appears to drive apposition and subsequent fusion of viral and target cell membranes. Membranes fusion leads to delivery of the nucleocapsid into the cytoplasm. This is Envelope glycoprotein (env) from Equine infectious anemia virus (isolate P3.2-5) (EIAV).